A 144-amino-acid polypeptide reads, in one-letter code: Large ribosomal subunit protein uL15 (144 aa).

A disordered region spans residues 1 to 51 (MRLNTLSPAEGAKHSAKRLGRGIGSGLGKTGGRGHKGQKSRTGGKVRRGFE). A compositionally biased stretch (gly residues) spans 21-31 (RGIGSGLGKTG). A compositionally biased stretch (basic residues) spans 32–47 (GRGHKGQKSRTGGKVR).

It belongs to the universal ribosomal protein uL15 family. As to quaternary structure, part of the 50S ribosomal subunit.

Functionally, binds to the 23S rRNA. The sequence is that of Large ribosomal subunit protein uL15 from Actinobacillus succinogenes (strain ATCC 55618 / DSM 22257 / CCUG 43843 / 130Z).